The following is a 311-amino-acid chain: Pyrimidine-specific ribonucleoside hydrolase RihA (311 aa).

Residue H240 is part of the active site.

Belongs to the IUNH family. RihA subfamily.

Functionally, hydrolyzes with equal efficiency cytidine or uridine to ribose and cytosine or uracil, respectively. This chain is Pyrimidine-specific ribonucleoside hydrolase RihA, found in Escherichia coli O139:H28 (strain E24377A / ETEC).